A 705-amino-acid polypeptide reads, in one-letter code: Elongation factor G (705 aa).

A tr-type G domain is found at 8–290 (ERYRNFGIMA…GVVHLLPSPA (283 aa)). GTP is bound by residues 17–24 (AHIDAGKT), 88–92 (DTPGH), and 142–145 (NKMD). Residues 290-309 (ADRPPVQGIDEDEKEDTRAA) form a disordered region.

It belongs to the TRAFAC class translation factor GTPase superfamily. Classic translation factor GTPase family. EF-G/EF-2 subfamily.

It is found in the cytoplasm. Catalyzes the GTP-dependent ribosomal translocation step during translation elongation. During this step, the ribosome changes from the pre-translocational (PRE) to the post-translocational (POST) state as the newly formed A-site-bound peptidyl-tRNA and P-site-bound deacylated tRNA move to the P and E sites, respectively. Catalyzes the coordinated movement of the two tRNA molecules, the mRNA and conformational changes in the ribosome. In Xanthomonas axonopodis pv. citri (strain 306), this protein is Elongation factor G.